Reading from the N-terminus, the 176-residue chain is 3-hydroxydecanoyl-[acyl-carrier-protein] dehydratase (176 aa).

The active site involves H75.

It belongs to the thioester dehydratase family. FabA subfamily. As to quaternary structure, homodimer.

It localises to the cytoplasm. It catalyses the reaction a (3R)-hydroxyacyl-[ACP] = a (2E)-enoyl-[ACP] + H2O. The catalysed reaction is (3R)-hydroxydecanoyl-[ACP] = (2E)-decenoyl-[ACP] + H2O. It carries out the reaction (2E)-decenoyl-[ACP] = (3Z)-decenoyl-[ACP]. It participates in lipid metabolism; fatty acid biosynthesis. Its function is as follows. Necessary for the introduction of cis unsaturation into fatty acids. Catalyzes the dehydration of (3R)-3-hydroxydecanoyl-ACP to E-(2)-decenoyl-ACP and then its isomerization to Z-(3)-decenoyl-ACP. Can catalyze the dehydratase reaction for beta-hydroxyacyl-ACPs with saturated chain lengths up to 16:0, being most active on intermediate chain length. The protein is 3-hydroxydecanoyl-[acyl-carrier-protein] dehydratase of Haemophilus ducreyi (strain 35000HP / ATCC 700724).